The sequence spans 200 residues: Small ribosomal subunit protein uS4 (200 aa).

The disordered stretch occupies residues 22–42; it reads TGKELEKRPYAPGPHGPNQRK. Residues 92–152 form the S4 RNA-binding domain; it reads ARLDNLVYRM…EKSNSLVVVK (61 aa).

It belongs to the universal ribosomal protein uS4 family. In terms of assembly, part of the 30S ribosomal subunit. Contacts protein S5. The interaction surface between S4 and S5 is involved in control of translational fidelity.

In terms of biological role, one of the primary rRNA binding proteins, it binds directly to 16S rRNA where it nucleates assembly of the body of the 30S subunit. Functionally, with S5 and S12 plays an important role in translational accuracy. This Bacillus cereus (strain B4264) protein is Small ribosomal subunit protein uS4.